A 328-amino-acid chain; its full sequence is MSVQLDPQGQLRHLVTTEGLPRELLTRILDTAESFSGVLGKSVKKVPLLRGRTIINLFFEPSTRTRTTFELAAQRLSADVLNIDVATSSTSKGESLLDMLRNLEAMQCDAFVVRHADSGAAEFIARHVAPGVAVINAGDGRHAHPTQALLDAFTIRREKGPLEPLTIAIVGDILHSRVARSQIHALLGLGAGEVRVIGPRTLLPRDIQRLGVRVYEDMDAGLDGADVLIMLRLQRERMRGALLPSESEYFSRYGLTEQRLERTHPEAIVMHPGPVNRGVELDPQVADGPRSVILRQVTNGIAVRMAVMSIVLGGHGEAPAEPIEEASS.

2 residues coordinate carbamoyl phosphate: Arg-64 and Thr-65. Residue Lys-92 coordinates L-aspartate. The carbamoyl phosphate site is built by Arg-114, His-144, and Gln-147. 2 residues coordinate L-aspartate: Arg-177 and Arg-232. Carbamoyl phosphate is bound by residues Gly-273 and Pro-274.

This sequence belongs to the aspartate/ornithine carbamoyltransferase superfamily. ATCase family. Heterododecamer (2C3:3R2) of six catalytic PyrB chains organized as two trimers (C3), and six regulatory PyrI chains organized as three dimers (R2).

It catalyses the reaction carbamoyl phosphate + L-aspartate = N-carbamoyl-L-aspartate + phosphate + H(+). It functions in the pathway pyrimidine metabolism; UMP biosynthesis via de novo pathway; (S)-dihydroorotate from bicarbonate: step 2/3. Its function is as follows. Catalyzes the condensation of carbamoyl phosphate and aspartate to form carbamoyl aspartate and inorganic phosphate, the committed step in the de novo pyrimidine nucleotide biosynthesis pathway. The sequence is that of Aspartate carbamoyltransferase catalytic subunit from Halorhodospira halophila (strain DSM 244 / SL1) (Ectothiorhodospira halophila (strain DSM 244 / SL1)).